The following is a 491-amino-acid chain: MANYFNTLNLRQQLAQLGKCRFMGRDEFADGASYLQGKKVVIVGCGAQGLNQGLNMRDSGLDISYALRKEAIAEKRASWRKATENGFKVGTYEELIPQADLVVNLTPDKQHSDVVRSVQPLMKDGAALGYSHGFNIVEVGEQIRKDITVVMVAPKCPGTEVREEYKRGFGVPTLIAVHPENDPKGEGMAIAKAWAAATGGHRAGVLESSFVAEVKSDLMGEQTILCGMLQAGSLLCFDKLVAEGTDPAYAEKLIQFGWETITEALKQGGITLMMDRLSNPAKLRAYALSEQLKEIMAPLFQKHMDDIISGEFSSGMMADWANDDKKLLTWREETGKTAFETAPQFEGKIGEQEYFDKGVLMIAMVKAGVELAFETMVDSGIIEESAYYESLHELPLIANTIARKRLYEMNVVISDTAEYGNYLFSYACVPLLKPFMAELQPGDLGSAIPEGAVDNAQLRDVNDAIRSHAIEQVGKKLRGYMTDMKRIAVAG.

Residues 15–208 form the KARI N-terminal Rossmann domain; sequence AQLGKCRFMG…GGHRAGVLES (194 aa). Residues 45-48, arginine 68, arginine 76, serine 78, and 108-110 each bind NADP(+); these read CGAQ and DKQ. Residue histidine 132 is part of the active site. An NADP(+)-binding site is contributed by glycine 158. KARI C-terminal knotted domains follow at residues 209–344 and 345–484; these read SFVA…TAPQ and FEGK…MTDM. Mg(2+) is bound by residues aspartate 217, glutamate 221, glutamate 389, and glutamate 393. Substrate is bound at residue serine 414.

The protein belongs to the ketol-acid reductoisomerase family. The cofactor is Mg(2+).

It catalyses the reaction (2R)-2,3-dihydroxy-3-methylbutanoate + NADP(+) = (2S)-2-acetolactate + NADPH + H(+). It carries out the reaction (2R,3R)-2,3-dihydroxy-3-methylpentanoate + NADP(+) = (S)-2-ethyl-2-hydroxy-3-oxobutanoate + NADPH + H(+). Its pathway is amino-acid biosynthesis; L-isoleucine biosynthesis; L-isoleucine from 2-oxobutanoate: step 2/4. The protein operates within amino-acid biosynthesis; L-valine biosynthesis; L-valine from pyruvate: step 2/4. In terms of biological role, involved in the biosynthesis of branched-chain amino acids (BCAA). Catalyzes an alkyl-migration followed by a ketol-acid reduction of (S)-2-acetolactate (S2AL) to yield (R)-2,3-dihydroxy-isovalerate. In the isomerase reaction, S2AL is rearranged via a Mg-dependent methyl migration to produce 3-hydroxy-3-methyl-2-ketobutyrate (HMKB). In the reductase reaction, this 2-ketoacid undergoes a metal-dependent reduction by NADPH to yield (R)-2,3-dihydroxy-isovalerate. This is Ketol-acid reductoisomerase (NADP(+)) from Salmonella choleraesuis (strain SC-B67).